We begin with the raw amino-acid sequence, 786 residues long: Neprilysin-3 (786 aa).

Over 1–52 the chain is Cytoplasmic; sequence MTRYKQTEFTEDDSSSIGGIQLNEATGHTGMQIRYHTARATWNWRSRNKTEK. The chain crosses the membrane as a helical; Signal-anchor for type II membrane protein span at residues 53-73; the sequence is WLLITTFVMAITIFTLLIVLF. The Extracellular portion of the chain corresponds to 74-786; that stretch reads TDGGSSDATK…MNPTEKCEVW (713 aa). The Peptidase M13 domain occupies 102 to 786; sequence PCLNKHCIFA…MNPTEKCEVW (685 aa). Disulfide bonds link Cys103–Cys108, Cys126–Cys771, Cys134–Cys731, Cys190–Cys450, and Cys659–Cys783. Asn216, Asn226, Asn256, Asn279, Asn305, Asn325, Asn356, Asn388, Asn496, and Asn569 each carry an N-linked (GlcNAc...) asparagine glycan. His622 provides a ligand contact to Zn(2+). Glu623 is an active-site residue. His626 and Glu682 together coordinate Zn(2+). Asp686 (proton donor) is an active-site residue. The N-linked (GlcNAc...) asparagine glycan is linked to Asn715.

This sequence belongs to the peptidase M13 family. It depends on Zn(2+) as a cofactor.

Its subcellular location is the cell membrane. It carries out the reaction Preferential cleavage of polypeptides between hydrophobic residues, particularly with Phe or Tyr at P1'.. In terms of biological role, metalloendoprotease which is required in the dorsal paired medial neurons for the proper formation of long-term (LTM) and middle-term memories (MTM). Also required in the mushroom body neurons where it functions redundantly with neprilysins Nep2 and Nep4 in normal LTM formation. This Drosophila melanogaster (Fruit fly) protein is Neprilysin-3.